The following is a 242-amino-acid chain: Protein HTATIP2 (242 aa).

An N-acetylalanine modification is found at A2. A required for interaction with elongation factor EEF1A1 region spans residues 2-25 (ADKETLLKLREDFKMQNKSVFILG). NADPH contacts are provided by S27, G28, E29, T30, R52, R53, L92, G93, Y143, K147, L170, and R178. Y143 functions as the Proton acceptor in the catalytic mechanism. K147 is an active-site residue.

As to quaternary structure, monomer. Forms homodimers during oxidative stress. Interacts (via N-terminus) with elongation factor EEF1A1 (via middle-region); the interaction is direct and competes with EEF1A1 binding to guanyl-nucleotide exchange factor EEF1B2, thereby inhibiting GDP for GTP exchange and reactivation of EEF1A1. Interacts with nuclear transport receptors XPO4, IPO5/RANBP5, IPO7, IPO9 and KPNB1 as well as GCN1L1/GCN1 and LRPPRC probably through their HEAT repeats. Binds NCOA5/CIA.

Functionally, represses translation by preventing reactivation of elongation factor eEF1A. May also inhibit nuclear import by competing with nuclear import substrates for binding to a subset of nuclear transport receptors. Has additionally been proposed to act as a redox sensor involved in cellular oxidative stress surveillance. May bind NADPH. The polypeptide is Protein HTATIP2 (Rattus norvegicus (Rat)).